Consider the following 164-residue polypeptide: Anterior gradient protein 3 (164 aa).

The signal sequence occupies residues 1–19 (MYFPMIELTLVLLASSNLA). The Prevents secretion from ER motif lies at 161-164 (QTEL).

This sequence belongs to the AGR family.

The protein resides in the endoplasmic reticulum. Its subcellular location is the cytoplasm. Its function is as follows. Required for calcium-mediated regulation of ciliary beat frequency in the airway. The polypeptide is Anterior gradient protein 3 (Xenopus tropicalis (Western clawed frog)).